The following is a 283-amino-acid chain: 4-diphosphocytidyl-2-C-methyl-D-erythritol kinase (283 aa).

K10 is a catalytic residue. Position 99–109 (99–109) interacts with ATP; that stretch reads PMGGGLGGGSS. D141 is an active-site residue.

The protein belongs to the GHMP kinase family. IspE subfamily. As to quaternary structure, homodimer.

The enzyme catalyses 4-CDP-2-C-methyl-D-erythritol + ATP = 4-CDP-2-C-methyl-D-erythritol 2-phosphate + ADP + H(+). It functions in the pathway isoprenoid biosynthesis; isopentenyl diphosphate biosynthesis via DXP pathway; isopentenyl diphosphate from 1-deoxy-D-xylulose 5-phosphate: step 3/6. In terms of biological role, catalyzes the phosphorylation of the position 2 hydroxy group of 4-diphosphocytidyl-2C-methyl-D-erythritol. The chain is 4-diphosphocytidyl-2-C-methyl-D-erythritol kinase from Escherichia coli (strain 55989 / EAEC).